The sequence spans 252 residues: Ribosomal RNA small subunit methyltransferase A (252 aa).

6 residues coordinate S-adenosyl-L-methionine: Asn10, Leu12, Gly36, Glu57, Asp81, and Asn98.

It belongs to the class I-like SAM-binding methyltransferase superfamily. rRNA adenine N(6)-methyltransferase family. RsmA subfamily.

Its subcellular location is the cytoplasm. It carries out the reaction adenosine(1518)/adenosine(1519) in 16S rRNA + 4 S-adenosyl-L-methionine = N(6)-dimethyladenosine(1518)/N(6)-dimethyladenosine(1519) in 16S rRNA + 4 S-adenosyl-L-homocysteine + 4 H(+). Specifically dimethylates two adjacent adenosines (A1518 and A1519) in the loop of a conserved hairpin near the 3'-end of 16S rRNA in the 30S particle. May play a critical role in biogenesis of 30S subunits. The protein is Ribosomal RNA small subunit methyltransferase A of Mycoplasmopsis pulmonis (strain UAB CTIP) (Mycoplasma pulmonis).